The primary structure comprises 244 residues: MAGHSKWAQIKRKKGANDKKRSAIYSKHIRAIQAAVRSGGSGDPAANLALKNAIAAAKADTVPADNIENAIKRAVGAAEGAADYKEVTYEGYGPGGTAIFIEALTDNVNRTVADIRAVFNKRGGSLGNSGSVAWQFEKKGVILLSDTSEAAQEVAIENGAEDIQESVDGLEISTAPNDLYAVQDALSAAGFKPESGQITMIPSNTVAVNGDDARKLMALVDALEDLDDVQNVYTNADLPEEVEA.

Positions 1-21 (MAGHSKWAQIKRKKGANDKKR) are disordered.

This sequence belongs to the TACO1 family.

The protein localises to the cytoplasm. The polypeptide is Probable transcriptional regulatory protein Dgeo_2194 (Deinococcus geothermalis (strain DSM 11300 / CIP 105573 / AG-3a)).